Reading from the N-terminus, the 100-residue chain is uncharacterized protein (100 aa).

This is an uncharacterized protein from Homo sapiens (Human).